The chain runs to 308 residues: MPRNIHYVKSKTTAVFEGIPGVGKSTITTEAARELKRRLGDEYIIFLNFAPLEGDAVETVLATNTKGSKRGMDFIRMVYDPEIKAENLHFATTVTGQLIAKELKFNSEYVVDKSKGKKHLINIIERNSASAAGIFIAGNYYNMRLASDLPGDVRNRYDGDWKNVVHTQNNMAAAAKNVFLTADESERFIIVFLETDYKKAFERVVKRGRNWEADKMTIDYMRELDNLQRQYDGLVDEDKALHWKRLYPVEQVKTIHFDVDKYYTGKEETKERDIINMVEDCNEVLFRHLIVPERKSLWKRFMDFVLPK.

A coiled-coil region spans residues 212-242 (EADKMTIDYMRELDNLQRQYDGLVDEDKALH).

This is an uncharacterized protein from Ostreid herpesvirus 1 (isolate France) (OsHV-1).